The sequence spans 364 residues: Mannose-1-phosphate guanyltransferase (364 aa).

This sequence belongs to the transferase hexapeptide repeat family.

Its subcellular location is the cytoplasm. The enzyme catalyses alpha-D-mannose 1-phosphate + GTP + H(+) = GDP-alpha-D-mannose + diphosphate. Its pathway is nucleotide-sugar biosynthesis; GDP-alpha-D-mannose biosynthesis; GDP-alpha-D-mannose from alpha-D-mannose 1-phosphate (GTP route): step 1/1. Its function is as follows. Involved in cell wall synthesis where it is required for glycosylation. Involved in cell cycle progression through cell-size checkpoint. The chain is Mannose-1-phosphate guanyltransferase (mpg1) from Aspergillus fumigatus (strain ATCC MYA-4609 / CBS 101355 / FGSC A1100 / Af293) (Neosartorya fumigata).